The sequence spans 140 residues: Perlin matrix protein (140 aa).

The signal sequence occupies residues 1 to 26 (MTCTLRLTVAALVLLGICHLSRPVAA).

It belongs to the N16 matrix protein family. In terms of assembly, heterooligomer; disulfide-linked. Pif97, Pif80, N16 and other proteins form a complex. In terms of tissue distribution, component of conchiolin, the organic matrix of nacre. Only expressed in the dorsal region of the mantle.

Its subcellular location is the secreted. The protein localises to the extracellular space. It is found in the extracellular matrix. Functionally, may be specifically involved in the formation of the nacreous layer. The protein is Perlin matrix protein of Margaritifera margaritifera (Freshwater pearl mussel).